A 197-amino-acid chain; its full sequence is Superoxide dismutase [Fe] (197 aa).

His26, His75, Asp157, and His161 together coordinate Fe cation.

It belongs to the iron/manganese superoxide dismutase family. In terms of assembly, homotetramer. The cofactor is Fe cation.

It catalyses the reaction 2 superoxide + 2 H(+) = H2O2 + O2. In terms of biological role, destroys superoxide anion radicals which are normally produced within the cells and which are toxic to biological systems. This Cupriavidus metallidurans (strain ATCC 43123 / DSM 2839 / NBRC 102507 / CH34) (Ralstonia metallidurans) protein is Superoxide dismutase [Fe].